The chain runs to 159 residues: Aphid transmission protein (159 aa).

This sequence belongs to the caulimoviridae ORF II family.

This protein is involved in virus transmission. This Cauliflower mosaic virus (strain CM-1841) (CaMV) protein is Aphid transmission protein.